A 118-amino-acid polypeptide reads, in one-letter code: Large ribosomal subunit protein bL19 (118 aa).

This sequence belongs to the bacterial ribosomal protein bL19 family.

Functionally, this protein is located at the 30S-50S ribosomal subunit interface and may play a role in the structure and function of the aminoacyl-tRNA binding site. In Alcanivorax borkumensis (strain ATCC 700651 / DSM 11573 / NCIMB 13689 / SK2), this protein is Large ribosomal subunit protein bL19.